A 443-amino-acid chain; its full sequence is Proline--tRNA ligase (443 aa).

Belongs to the class-II aminoacyl-tRNA synthetase family. ProS type 2 subfamily. In terms of assembly, homodimer.

It localises to the cytoplasm. It carries out the reaction tRNA(Pro) + L-proline + ATP = L-prolyl-tRNA(Pro) + AMP + diphosphate. Its function is as follows. Catalyzes the attachment of proline to tRNA(Pro) in a two-step reaction: proline is first activated by ATP to form Pro-AMP and then transferred to the acceptor end of tRNA(Pro). This chain is Proline--tRNA ligase, found in Zymomonas mobilis subsp. mobilis (strain ATCC 31821 / ZM4 / CP4).